The chain runs to 103 residues: UPF0145 protein NT01CX_0170 (103 aa).

It belongs to the UPF0145 family.

The sequence is that of UPF0145 protein NT01CX_0170 from Clostridium novyi (strain NT).